Consider the following 25-residue polypeptide: M-poneritoxin-Na1b (25 aa).

This sequence belongs to the non-disulfide-bridged peptide (NDBP) superfamily. Medium-length antimicrobial peptide (group 3) family. Ponericin-W subfamily. As to expression, expressed by the venom gland.

It localises to the secreted. The protein localises to the target cell membrane. Functionally, membrane-perturbating peptide with multiple activities. It is insecticidal, since it induces reversible paralysis in insects (L.cuprina) after 1 hour, but fails to kill flies. It shows a relatively strong and broad-spectrum antibacterial activity against both Gram-positive and Gram-negative bacteria (MIC&lt;20 uM). It is also anthelmintic, since it potently inhibits the larval development of the major pathogenic nematode of ruminants (H.contortus, IC(50)=2.8 uM). Interestingly, only at 10 uM, it increases adult males motility of the other nematode B.malayi for 24 hours post-treatment, followed by a reduction in motility for the rest of the experiment. It shows cytotoxic activity against HEK293 cells (EC(50)=4-6 uM) and induces hemolysis in human erythrocytes (EC(50)=40-62 uM). In addition, it causes an important increase in intracellular calcium concentration on neuronal and epithelial cell lines, which supports a non-specific membrane perturbation mechanism of action. In vivo, it induces pain by intraplantar injection into mice, suggesting a defensive function against vertebrate predators. The sequence is that of M-poneritoxin-Na1b from Neoponera apicalis (Ant).